The following is a 201-amino-acid chain: Anthranilate synthase component II (201 aa).

The Glutamine amidotransferase type-1 domain maps to Asp3–Pro196. Gly57–Gly59 contributes to the L-glutamine binding site. The active-site Nucleophile; for GATase activity is the Cys84. L-glutamine is bound by residues Gln88 and Ser134–Leu135. Catalysis depends on for GATase activity residues His170 and Glu172.

Tetramer of two components I and two components II.

The catalysed reaction is chorismate + L-glutamine = anthranilate + pyruvate + L-glutamate + H(+). It catalyses the reaction N-(5-phospho-beta-D-ribosyl)anthranilate + diphosphate = 5-phospho-alpha-D-ribose 1-diphosphate + anthranilate. Its pathway is amino-acid biosynthesis; L-tryptophan biosynthesis; L-tryptophan from chorismate: step 1/5. The protein operates within amino-acid biosynthesis; L-tryptophan biosynthesis; L-tryptophan from chorismate: step 2/5. The polypeptide is Anthranilate synthase component II (trpG-TRPD) (Shigella dysenteriae).